Here is a 704-residue protein sequence, read N- to C-terminus: Arylphorin (704 aa).

Positions 1–16 (MKIVLVLAGLIALVQS) are cleaved as a signal peptide. N-linked (GlcNAc...) asparagine glycans are attached at residues asparagine 73, asparagine 212, and asparagine 360.

This sequence belongs to the hemocyanin family. In terms of assembly, homohexamer of two stacked trimers; disulfide-linked. Post-translationally, glycosylation at Asn-360 is required for proper folding.

It localises to the secreted. The protein resides in the extracellular space. Its function is as follows. Arylphorin is a larval storage protein (LSP) which may serve as a storage protein used primarily as a source of aromatic amino acids for protein synthesis during metamorphosis. It is a constituent of the sclerotizing system of the cuticle, and serves as a carrier for ecdysteroid hormone. The chain is Arylphorin from Antheraea pernyi (Chinese oak silk moth).